A 696-amino-acid chain; its full sequence is Gametogenetin-binding protein 2 (696 aa).

Phosphoserine occurs at positions 360 and 602.

In terms of assembly, interacts with isoform 1 of GGN. Testis-specific.

The protein resides in the cytoplasmic vesicle. May be involved in spermatogenesis. This Mus musculus (Mouse) protein is Gametogenetin-binding protein 2 (Ggnbp2).